Consider the following 267-residue polypeptide: Thiamine thiazole synthase (267 aa).

NAD(+) contacts are provided by residues S41, 60-61 (ER), G68, V132, and 160-162 (HVD). D162 and H177 together coordinate Fe cation. M227 provides a ligand contact to NAD(+). R237 lines the glycine pocket.

The protein belongs to the THI4 family. In terms of assembly, homooctamer; tetramer of dimers. The cofactor is Fe(2+).

The catalysed reaction is hydrogen sulfide + glycine + NAD(+) = ADP-5-ethyl-4-methylthiazole-2-carboxylate + nicotinamide + 3 H2O + H(+). The protein operates within cofactor biosynthesis; thiamine diphosphate biosynthesis. In terms of biological role, involved in the biosynthesis of the thiazole moiety of thiamine. Catalyzes the conversion of NAD and glycine to adenosine diphosphate 5-(2-hydroxyethyl)-4-methylthiazole-2-carboxylate (ADT), an adenylated thiazole intermediate, using free sulfide as a source of sulfur. This is Thiamine thiazole synthase from Saccharolobus islandicus (strain M.14.25 / Kamchatka #1) (Sulfolobus islandicus).